The sequence spans 133 residues: uncharacterized protein (133 aa).

4 consecutive transmembrane segments (helical) span residues 5–27, 42–64, 77–99, and 103–125; these read KLFF…FSLI, IAWN…YSLY, ALIS…TFSS, and LVWW…LLLK.

The protein localises to the cell membrane. This is an uncharacterized protein from Bacillus subtilis (strain 168).